The following is a 510-amino-acid chain: Photosystem II CP47 reaction center protein (510 aa).

Over 2–16 the chain is Cytoplasmic; it reads GLPWYRVHTVLINDP. A helical membrane pass occupies residues 17–37; that stretch reads GRLIAAHLMHTALVAGWAGSM. At 38–94 the chain is on the lumenal side; the sequence is ALYELATFDPSDPVLNPMWRQGMFVLPFMARLGVTGSWSGWSITGETGIDPGFWSFE. A helical membrane pass occupies residues 95-116; that stretch reads GVALAHIVLSGLLFLAACWHWV. Residues 117–134 are Cytoplasmic-facing; that stretch reads YWDLELFRDPRTGEPALD. Residues 135-157 traverse the membrane as a helical segment; that stretch reads LPKMFGIHLFLAGLLCFGFGAFH. The Lumenal segment spans residues 158-196; it reads LTGLFGPGMWVSDPYGLTGSVQPVAPEWGPDGFNPYNPG. The helical transmembrane segment at 197-218 threads the bilayer; it reads GVVAHHIAAGIVGIIAGLFHIL. At 219–233 the chain is on the cytoplasmic side; the sequence is VRPPQRLYKALRMGN. Residues 234 to 254 form a helical membrane-spanning segment; it reads IETVLSSSIAAVFFAAFVVAG. Residues 255 to 450 lie on the Lumenal side of the membrane; it reads TMWYGSATTP…GIFRTSPRGW (196 aa). A helical membrane pass occupies residues 451–473; the sequence is FTFAHAVFALLFFFGHIWHGART. Topologically, residues 474 to 510 are cytoplasmic; it reads LFRDVFSGIDPELSPEQVEWGFYQKVGDVTTRRKEAV.

In terms of assembly, PSII is composed of 1 copy each of membrane proteins PsbA, PsbB, PsbC, PsbD, PsbE, PsbF, PsbH, PsbI, PsbJ, PsbK, PsbL, PsbM, PsbT, PsbX, PsbY, PsbZ, Psb30/Ycf12, peripheral proteins PsbO, CyanoQ (PsbQ), PsbU, PsbV and a large number of cofactors. It forms dimeric complexes. Part of a photosystem II (PSII) assembly intermediate complex PSII-I; crystallized from a strain deleted of psbJ, it forms monomeric PSII before addition of the oxygen evolving complex. PSII-I includes 3 assembly factors not found in mature PSII (Psb27, Psb28 and Psb34). Binds multiple chlorophylls. PSII binds additional chlorophylls, carotenoids and specific lipids. serves as cofactor.

Its subcellular location is the cellular thylakoid membrane. One of the components of the core complex of photosystem II (PSII). It binds chlorophyll and helps catalyze the primary light-induced photochemical processes of PSII. PSII is a light-driven water:plastoquinone oxidoreductase, using light energy to abstract electrons from H(2)O, generating O(2) and a proton gradient subsequently used for ATP formation. The protein is Photosystem II CP47 reaction center protein of Thermosynechococcus vestitus (strain NIES-2133 / IAM M-273 / BP-1).